The sequence spans 25 residues: MRAKWRKKRVRRLKRKRRKVRARSK.

The interval 1–25 is disordered; sequence MRAKWRKKRVRRLKRKRRKVRARSK.

This sequence belongs to the eukaryotic ribosomal protein eS32 family. Component of the small ribosomal subunit.

This is Small ribosomal subunit protein eS32 (RPL41) from Eremothecium gossypii (strain ATCC 10895 / CBS 109.51 / FGSC 9923 / NRRL Y-1056) (Yeast).